Here is a 117-residue protein sequence, read N- to C-terminus: Large ribosomal subunit protein eL34 (117 aa).

Belongs to the eukaryotic ribosomal protein eL34 family. As to quaternary structure, component of the large ribosomal subunit.

Its subcellular location is the cytoplasm. It is found in the cytosol. The protein localises to the endoplasmic reticulum. In terms of biological role, component of the large ribosomal subunit. The ribosome is a large ribonucleoprotein complex responsible for the synthesis of proteins in the cell. The chain is Large ribosomal subunit protein eL34 (rpl34) from Danio rerio (Zebrafish).